The chain runs to 910 residues: UPF0182 protein Acid_6445 (910 aa).

7 consecutive transmembrane segments (helical) span residues 17-37 (ITLLAILLFLLFGLRSFAGYA), 56-76 (LYYGIAPVAVATLVAFLALWI), 101-121 (LALLFLAWFIAAGAIDTWTVV), 157-177 (LLRSYVLAVIIFCVLLYWIAA), 210-229 (FLRGAAVIGLIALAVRFYLG), 252-272 (IGLPLQWLVIFACLAAAAFVA), and 276-296 (WFLAALMALALVVDFAAPRIV).

It belongs to the UPF0182 family.

The protein localises to the cell membrane. This Solibacter usitatus (strain Ellin6076) protein is UPF0182 protein Acid_6445.